The following is a 621-amino-acid chain: Autonomous transposable element EN-1 mosaic protein (621 aa).

Disordered stretches follow at residues 1 to 119, 428 to 447, 498 to 530, and 549 to 621; these read MFRM…PPRR, YTRR…PSAR, QQPP…TSVQ, and RQPG…PPTE. 2 stretches are compositionally biased toward polar residues: residues 27–39 and 47–61; these read EGTT…QEQL and RGSS…TTSR. Residues 82-102 show a composition bias toward acidic residues; sequence AAVDAEAEEAAAELDDGEETS. Over residues 570-594 the composition is skewed to low complexity; sequence PPRGQSQSPGLPSHSPGSGSGSHHA.

In terms of biological role, this protein has most probably three functions; the mutator (M) function, for excision and transposition; the suppressor (S) function, which inhibits residual gene activity of certain alleles in which inhibitor elements are integrated; an activator (A) function is proposed, because inactive SPM can be activated by a second SPM. In Zea mays (Maize), this protein is Autonomous transposable element EN-1 mosaic protein.